The chain runs to 523 residues: Amino acid transporter protein 6 (523 aa).

Over 1–19 (MLNVFGVSASMPDDSRSQK) the chain is Cytoplasmic. A helical transmembrane segment spans residues 20 to 40 (MGLLGAISYIVGNIVGSGIFI). At 41–51 (TPTSIIENVNS) the chain is on the extracellular side. A helical membrane pass occupies residues 52–72 (VGLSLAIWILAAFISMLGSFC). At 73-86 (YVELGTSIRLSGGD) the chain is on the cytoplasmic side. A helical transmembrane segment spans residues 87 to 107 (FAYLCFMKWYPVAFAFMCIGC). Residues 108–145 (TINYPATLAVQAQTFAEYVFRGAGVELDETSEFWAKKL) lie on the Extracellular side of the membrane. A helical transmembrane segment spans residues 146–166 (LGFSLIILLMFMNFFSLKTFV). The Cytoplasmic segment spans residues 167-173 (QRFSILA). A helical transmembrane segment spans residues 174–194 (SLAKIAATLLIIITGFYYLIF). Topologically, residues 195–214 (KHWKQNLEEPFKGSNWNPGP) are extracellular. Residues 215–235 (FVNALFAGLFSYDGWDILNFG) form a helical membrane-spanning segment. The Cytoplasmic segment spans residues 236–249 (AEEIENPKRTMPLS). Residues 250 to 270 (IIIGMTCIGVIYVAVNVAYSI) traverse the membrane as a helical segment. Residues 271–290 (VLSPTEMIASNAVAIDFANK) are Extracellular-facing. Residue N289 is glycosylated (N-linked (GlcNAc...) asparagine). Residues 291 to 311 (TLGAAAFVVPVMVAILLIGSL) traverse the membrane as a helical segment. At 312 to 348 (NSTMFSASRYLQAVSRQGHIPSAISGIAPNCDSPRVA) the chain is on the cytoplasmic side. The chain crosses the membrane as a helical span at residues 349 to 369 (LLVHILIAIAVSFLGDPDKLI). Residues 370–404 (NYVAFAQWSQRAFTMSALLYLRIRGRPRHPDRIQL) lie on the Extracellular side of the membrane. A helical membrane pass occupies residues 405–425 (PIIMPILFFLVCTSMVVISII). The Cytoplasmic segment spans residues 426–429 (DDFK). A helical transmembrane segment spans residues 430–450 (SSAVGLGILLGGLIIFIIFVW). The Extracellular portion of the chain corresponds to 451 to 523 (DRALPSSHTF…GNGQFKCTRM (73 aa)). N-linked (GlcNAc...) asparagine glycosylation occurs at N462. The PDZ-binding motif motif lies at 521–523 (TRM).

This sequence belongs to the amino acid-polyamine-organocation (APC) superfamily. As to quaternary structure, interacts (via PDZ-binding motif) with nfrl-1 (via PDZ 2 domain); the interaction with nrfl-1 is required to sequester aat-6 to the apical cell membrane of intestinal cells. Expressed at the apical cell membrane of intestinal cells.

It is found in the apical cell membrane. Amino acid transporter that mediates the uptake of the L-enantiomers of various amino acids, including L-glutamate. May play a role in promoting fertility. In Caenorhabditis elegans, this protein is Amino acid transporter protein 6.